Reading from the N-terminus, the 264-residue chain is Small ribosomal subunit protein eS1B (264 aa).

Residues 1-19 are compositionally biased toward basic residues; that stretch reads MALGKNKRISKGGKRGKRG. Residues 1 to 23 are disordered; the sequence is MALGKNKRISKGGKRGKRGKAQE.

The protein belongs to the eukaryotic ribosomal protein eS1 family. Component of the small ribosomal subunit. Mature ribosomes consist of a small (40S) and a large (60S) subunit. The 40S subunit contains about 33 different proteins and 1 molecule of RNA (18S). The 60S subunit contains about 49 different proteins and 3 molecules of RNA (25S, 5.8S and 5S).

The protein localises to the cytoplasm. This chain is Small ribosomal subunit protein eS1B, found in Leishmania infantum.